Here is a 360-residue protein sequence, read N- to C-terminus: Magnesium-protoporphyrin IX monomethyl ester [oxidative] cyclase (360 aa).

Belongs to the AcsF family. It depends on Fe cation as a cofactor.

It carries out the reaction Mg-protoporphyrin IX 13-monomethyl ester + 3 NADPH + 3 O2 + 2 H(+) = 3,8-divinyl protochlorophyllide a + 3 NADP(+) + 5 H2O. The protein operates within porphyrin-containing compound metabolism; chlorophyll biosynthesis (light-independent). Functionally, catalyzes the formation of the isocyclic ring in chlorophyll biosynthesis. Mediates the cyclase reaction, which results in the formation of divinylprotochlorophyllide (Pchlide) characteristic of all chlorophylls from magnesium-protoporphyrin IX 13-monomethyl ester (MgPMME). This chain is Magnesium-protoporphyrin IX monomethyl ester [oxidative] cyclase, found in Synechococcus sp. (strain WH7803).